A 234-amino-acid polypeptide reads, in one-letter code: Uridylate kinase (234 aa).

9–12 (KLSG) lines the ATP pocket. G51 contacts UMP. Residues G52 and R56 each contribute to the ATP site. Residues D71 and 132-139 (CGNPFFTT) each bind UMP. Residues T159, Y165, and D168 each coordinate ATP.

This sequence belongs to the UMP kinase family. In terms of assembly, homohexamer.

Its subcellular location is the cytoplasm. It catalyses the reaction UMP + ATP = UDP + ADP. It functions in the pathway pyrimidine metabolism; CTP biosynthesis via de novo pathway; UDP from UMP (UMPK route): step 1/1. Its activity is regulated as follows. Inhibited by UTP. In terms of biological role, catalyzes the reversible phosphorylation of UMP to UDP. In Prochlorococcus marinus (strain MIT 9301), this protein is Uridylate kinase.